Consider the following 255-residue polypeptide: Geranylgeranylglyceryl phosphate synthase (255 aa).

The Mg(2+) site is built by aspartate 34 and threonine 64. Residues 182–188 (YLEAGSG), 213–214 (GG), and 235–236 (GN) contribute to the sn-glycerol 1-phosphate site.

The protein belongs to the GGGP/HepGP synthase family. Group II subfamily. Requires Mg(2+) as cofactor.

The protein resides in the cytoplasm. It catalyses the reaction sn-glycerol 1-phosphate + (2E,6E,10E)-geranylgeranyl diphosphate = sn-3-O-(geranylgeranyl)glycerol 1-phosphate + diphosphate. It functions in the pathway membrane lipid metabolism; glycerophospholipid metabolism. Prenyltransferase that catalyzes the transfer of the geranylgeranyl moiety of geranylgeranyl diphosphate (GGPP) to the C3 hydroxyl of sn-glycerol-1-phosphate (G1P). This reaction is the first ether-bond-formation step in the biosynthesis of archaeal membrane lipids. This Saccharolobus islandicus (strain M.16.27) (Sulfolobus islandicus) protein is Geranylgeranylglyceryl phosphate synthase.